The primary structure comprises 217 residues: Probable transaldolase (217 aa).

The active-site Schiff-base intermediate with substrate is the lysine 83.

This sequence belongs to the transaldolase family. Type 3B subfamily.

It localises to the cytoplasm. The enzyme catalyses D-sedoheptulose 7-phosphate + D-glyceraldehyde 3-phosphate = D-erythrose 4-phosphate + beta-D-fructose 6-phosphate. The protein operates within carbohydrate degradation; pentose phosphate pathway; D-glyceraldehyde 3-phosphate and beta-D-fructose 6-phosphate from D-ribose 5-phosphate and D-xylulose 5-phosphate (non-oxidative stage): step 2/3. Functionally, transaldolase is important for the balance of metabolites in the pentose-phosphate pathway. This chain is Probable transaldolase, found in Hydrogenobaculum sp. (strain Y04AAS1).